The chain runs to 771 residues: Glucocorticoid receptor (771 aa).

Residues 1 to 415 (MDLKESVTSS…STTTGPPPKL (415 aa)) form a modulating region. At T8 the chain carries Phosphothreonine. R22 carries the post-translational modification Omega-N-methylarginine. Phosphoserine occurs at positions 44, 133, 199, 207, and 222. Over residues 129–172 (SRSTSVPENPKNSASAVSGTPTEEFPKTQSDLSSEQENLKSQAG) the composition is skewed to polar residues. The interval 129–184 (SRSTSVPENPKNSASAVSGTPTEEFPKTQSDLSSEQENLKSQAGTNGGNVKFPPDQ) is disordered. K254 is covalently cross-linked (Glycyl lysine isopeptide (Lys-Gly) (interchain with G-Cter in SUMO2)). S263 is subject to Phosphoserine. Residues K273 and K289 each participate in a glycyl lysine isopeptide (Lys-Gly) (interchain with G-Cter in SUMO); alternate cross-link. Glycyl lysine isopeptide (Lys-Gly) (interchain with G-Cter in SUMO2); alternate cross-links involve residues K273 and K289. Residues S303 and S400 each carry the phosphoserine modification. The tract at residues 390–411 (SSPGLRPDVSSPPSSSSTTTGP) is disordered. Low complexity predominate over residues 400–409 (SPPSSSSTTT). K414 is covalently cross-linked (Glycyl lysine isopeptide (Lys-Gly) (interchain with G-Cter in ubiquitin)). NR C4-type zinc fingers lie at residues 416-436 (CLVC…CGSC) and 452-476 (CAGR…YRKC). A DNA-binding region (nuclear receptor) is located at residues 416-481 (CLVCSDELSG…RYRKCLQAGM (66 aa)). 4 positions are modified to N6-acetyllysine: K475, K487, K489, and K490. The segment at 480 to 771 (GMNLQARKTK…DIKKLLFHQK (292 aa)) is interaction with CLOCK. Residues 482–517 (NLQARKTKKKIKGIQQATTGVSQNTSENPNKTIVPA) form a hinge region. Positions 518–752 (TLPQLTPTLV…FPEMLAEIIT (235 aa)) constitute an NR LBD domain. The tract at residues 526–691 (LVSLLEVIEP…EIRMTYIKEL (166 aa)) is interaction with CRY1. K697 participates in a covalent cross-link: Glycyl lysine isopeptide (Lys-Gly) (interchain with G-Cter in SUMO).

The protein belongs to the nuclear hormone receptor family. NR3 subfamily. As to quaternary structure, heteromultimeric cytoplasmic complex with HSP90AA1, HSPA1A/HSPA1B, and FKBP5 or another immunophilin such as PPID, STIP1, or the immunophilin homolog PPP5C. Upon ligand binding FKBP5 dissociates from the complex and FKBP4 takes its place, thereby linking the complex to dynein and mediating transport to the nucleus, where the complex dissociates. Probably forms a complex composed of chaperones HSP90 and HSP70, co-chaperones CDC37, PPP5C, TSC1 and client protein TSC2, CDK4, AKT, RAF1 and NR3C1; this complex does not contain co-chaperones STIP1/HOP and PTGES3/p23. Directly interacts with UNC45A. Binds to DNA as a homodimer, and as heterodimer with NR3C2 or the retinoid X receptor. Binds STAT5A and STAT5B homodimers and heterodimers. Interacts with NRIP1, POU2F1, POU2F2 and TRIM28. Interacts with several coactivator complexes, including the SMARCA4 complex, CREBBP/EP300, TADA2L (Ada complex) and p160 coactivators such as NCOA2 and NCOA6. Interaction with BAG1 inhibits transactivation. Interacts with HEXIM1 and TGFB1I1. Interacts with NCOA1. Interacts with NCOA3, SMARCA4, SMARCC1, SMARCD1, and SMARCE1. Interacts with CLOCK, CRY1 and CRY2 in a ligand-dependent fashion. Interacts with CIART. Interacts with RWDD3. Interacts with UBE2I/UBC9 and this interaction is enhanced in the presence of RWDD3. Interacts with GRIP1. Interacts with NR4A3 (via nuclear receptor DNA-binding domain), represses transcription activity of NR4A3 on the POMC promoter Nur response element (NurRE). Directly interacts with PNRC2 to attract and form a complex with UPF1 and DCP1A; the interaction leads to rapid mRNA degradation. Interacts with GSK3B. Interacts with FNIP1 and FNIP2. Interacts (via C-terminus) with HNRNPU (via C-terminus). Interacts with MCM3AP. Interacts (via domain NR LBD) with HSP90AA1 and HSP90AB1. In the absence of hormonal ligand, interacts with TACC1. Interacts (via NR LBD domain) with ZNF764 (via KRAB domain); the interaction regulates transcription factor activity of NR3C1 by directing its actions toward certain biologic pathways. In terms of processing, acetylation by CLOCK reduces its binding to glucocorticoid response elements and its transcriptional activity. Increased proteasome-mediated degradation in response to glucocorticoids. Post-translationally, phosphorylated in the absence of hormone; becomes hyperphosphorylated in the presence of glucocorticoid. The Ser-199, Ser-222 and Ser-400-phosphorylated forms are mainly cytoplasmic, and the Ser-207-phosphorylated form is nuclear. Phosphorylation at Ser-207 increases transcriptional activity. Phosphorylation at Ser-199, Ser-222 and Ser-400 decreases signaling capacity. Phosphorylation at Ser-400 may protect from glucocorticoid-induced apoptosis. Phosphorylation at Ser-199 and Ser-207 is not required in regulation of chromosome segregation. May be dephosphorylated by PPP5C, attenuates NR3C1 action. In terms of processing, ubiquitinated by UBR5, leading to its degradation: UBR5 specifically recognizes and binds ligand-bound NR3C1 when it is not associated with coactivators (NCOAs). In presence of NCOAs, the UBR5-degron is not accessible, preventing its ubiquitination and degradation. Sumoylation at Lys-273 and Lys-289 negatively regulates its transcriptional activity. Sumoylation at Lys-697 positively regulates its transcriptional activity in the presence of RWDD3. Sumoylation at Lys-273 and Lys-289 is dispensable whereas sumoylation at Lys-697 is critical for the stimulatory effect of RWDD3 on its transcriptional activity. Heat shock increases sumoylation in a RWDD3-dependent manner.

The protein resides in the cytoplasm. Its subcellular location is the nucleus. The protein localises to the mitochondrion. It localises to the cytoskeleton. It is found in the spindle. The protein resides in the microtubule organizing center. Its subcellular location is the centrosome. The protein localises to the chromosome. It localises to the nucleoplasm. Receptor for glucocorticoids (GC). Has a dual mode of action: as a transcription factor that binds to glucocorticoid response elements (GRE), both for nuclear and mitochondrial DNA, and as a modulator of other transcription factors. Affects inflammatory responses, cellular proliferation and differentiation in target tissues. Involved in chromatin remodeling. Plays a role in rapid mRNA degradation by binding to the 5' UTR of target mRNAs and interacting with PNRC2 in a ligand-dependent manner which recruits the RNA helicase UPF1 and the mRNA-decapping enzyme DCP1A, leading to RNA decay. Could act as a coactivator for STAT5-dependent transcription upon growth hormone (GH) stimulation and could reveal an essential role of hepatic GR in the control of body growth. Mediates glucocorticoid-induced apoptosis. Promotes accurate chromosome segregation during mitosis. May act as a tumor suppressor. May play a negative role in adipogenesis through the regulation of lipolytic and antilipogenic gene expression. The chain is Glucocorticoid receptor (NR3C1) from Cavia porcellus (Guinea pig).